A 287-amino-acid chain; its full sequence is Bifunctional protein FolD (287 aa).

NADP(+) is bound by residues 166–168 (GAS) and I232.

It belongs to the tetrahydrofolate dehydrogenase/cyclohydrolase family. As to quaternary structure, homodimer.

The catalysed reaction is (6R)-5,10-methylene-5,6,7,8-tetrahydrofolate + NADP(+) = (6R)-5,10-methenyltetrahydrofolate + NADPH. The enzyme catalyses (6R)-5,10-methenyltetrahydrofolate + H2O = (6R)-10-formyltetrahydrofolate + H(+). Its pathway is one-carbon metabolism; tetrahydrofolate interconversion. In terms of biological role, catalyzes the oxidation of 5,10-methylenetetrahydrofolate to 5,10-methenyltetrahydrofolate and then the hydrolysis of 5,10-methenyltetrahydrofolate to 10-formyltetrahydrofolate. The chain is Bifunctional protein FolD from Aeromonas salmonicida (strain A449).